The primary structure comprises 282 residues: Elongation factor Ts (282 aa).

Positions 79–82 (TDFV) are involved in Mg(2+) ion dislocation from EF-Tu.

It belongs to the EF-Ts family.

The protein localises to the cytoplasm. Functionally, associates with the EF-Tu.GDP complex and induces the exchange of GDP to GTP. It remains bound to the aminoacyl-tRNA.EF-Tu.GTP complex up to the GTP hydrolysis stage on the ribosome. This chain is Elongation factor Ts, found in Colwellia psychrerythraea (strain 34H / ATCC BAA-681) (Vibrio psychroerythus).